Here is a 566-residue protein sequence, read N- to C-terminus: 3'-5' exoribonuclease parn-1 (566 aa).

Residues Asp-29, Glu-31, Asp-283, and Asp-379 each contribute to the a divalent metal cation site.

It belongs to the CAF1 family. Requires a divalent metal cation as cofactor. Expressed in germline cells.

It is found in the cytoplasm. In terms of biological role, involved in transcriptome surveillance. Required for piwi-interacting RNAs (piRNAs) 3'-end trimming, which is important for both fertility and piRNA-directed gene silencing. Has 3' to 5' exonuclease activity in vitro. This chain is 3'-5' exoribonuclease parn-1, found in Caenorhabditis elegans.